A 155-amino-acid polypeptide reads, in one-letter code: Secreted RxLR effector protein RXLR-C301 (155 aa).

The signal sequence occupies residues 1 to 24; sequence MRLYALSVSLLAAITLLACVIASA. Residues 34–64 carry the RxLR-dEER motif; sequence RRLSQDVSETEITELSESKKPTAQDIDNEER.

This sequence belongs to the RxLR effector family.

It is found in the secreted. Its subcellular location is the host cell membrane. In terms of biological role, secreted effector that does not suppress pattern-triggered immunity (PTI) in plant host. This chain is Secreted RxLR effector protein RXLR-C301, found in Plasmopara halstedii (Downy mildew of sunflower).